Consider the following 597-residue polypeptide: Gamma-terpinene synthase, chloroplastic (597 aa).

A chloroplast-targeting transit peptide spans 1-47 (MATLSMQVSILSKQVKNLNSFGMRASKLPMVARRVDVSTTRLRPICS). Residues D350 and D354 each contribute to the Mn(2+) site. A DDXXD motif motif is present at residues 350-354 (DDVYD). Homodimerization stretches follow at residues 356-362 (YGTLDEL) and 428-465 (EAKW…FTLP). Mn(2+) is bound by residues D494 and E502.

The protein belongs to the terpene synthase family. In terms of assembly, homodimer. Mn(2+) is required as a cofactor. Requires Mg(2+) as cofactor.

Its subcellular location is the plastid. It localises to the chloroplast. It catalyses the reaction (2E)-geranyl diphosphate = gamma-terpinene + diphosphate. The protein operates within secondary metabolite biosynthesis; terpenoid biosynthesis. Functionally, involved in the biosynthesis of phenolic monoterpenes natural products thymol and carvacrol which have a broad range of biological activities acting as antimicrobial compounds, insecticides, antioxidants and pharmaceutical agents. Monoterpene synthase which catalyzes the conversion of geranyl diphosphate (GPP) to gamma-terpinene and minor amounts of other monoterpenes (e.g. alpha-thujene, alpha-terpinene, myrcene, sabinene, (+)-R-limonene, alpha-pinene and alpha-phellandrene). This Thymus caespititius (Cretan thyme) protein is Gamma-terpinene synthase, chloroplastic.